Reading from the N-terminus, the 480-residue chain is UDP-glucose 6-dehydrogenase 4 (480 aa).

Residues 3 to 20 (KICC…MAVI), aspartate 33, arginine 38, threonine 90, threonine 128, and glutamate 161 contribute to the NAD(+) site. Residues 157-161 (EFLAE), lysine 216, 216-223 (KLAANAFL), 256-269 (RIGS…VGFG), and glycine 269 each bind substrate. Cysteine 272 (nucleophile) is an active-site residue. Lysine 275 contacts NAD(+). Residues phenylalanine 334 and lysine 335 each contribute to the substrate site. Arginine 342 provides a ligand contact to NAD(+). Arginine 447 serves as a coordination point for substrate.

This sequence belongs to the UDP-glucose/GDP-mannose dehydrogenase family.

It catalyses the reaction UDP-alpha-D-glucose + 2 NAD(+) + H2O = UDP-alpha-D-glucuronate + 2 NADH + 3 H(+). It participates in nucleotide-sugar biosynthesis; UDP-alpha-D-glucuronate biosynthesis; UDP-alpha-D-glucuronate from UDP-alpha-D-glucose: step 1/1. Its activity is regulated as follows. Inhibited by UDP-xylose. Involved in the biosynthesis of UDP-glucuronic acid (UDP-GlcA), providing nucleotide sugars for cell-wall polymers. The chain is UDP-glucose 6-dehydrogenase 4 from Arabidopsis thaliana (Mouse-ear cress).